A 125-amino-acid chain; its full sequence is Histone H2A (125 aa).

A compositionally biased stretch (basic residues) spans 1–18 (MSGRGKGGKAKAKAKSRS). The tract at residues 1-21 (MSGRGKGGKAKAKAKSRSSRA) is disordered. Serine 2 bears the N-acetylserine mark. Glutamine 104 carries the N5-methylglutamine modification.

It belongs to the histone H2A family. As to quaternary structure, the nucleosome is a histone octamer containing two molecules each of H2A, H2B, H3 and H4 assembled in one H3-H4 heterotetramer and two H2A-H2B heterodimers. The octamer wraps approximately 147 bp of DNA.

The protein resides in the nucleus. Its subcellular location is the chromosome. Functionally, core component of nucleosome. Nucleosomes wrap and compact DNA into chromatin, limiting DNA accessibility to the cellular machineries which require DNA as a template. Histones thereby play a central role in transcription regulation, DNA repair, DNA replication and chromosomal stability. DNA accessibility is regulated via a complex set of post-translational modifications of histones, also called histone code, and nucleosome remodeling. This chain is Histone H2A, found in Mytilus californianus (California mussel).